The sequence spans 210 residues: ESCRT-III complex subunit did4 (210 aa).

The disordered stretch occupies residues 1 to 38 (MGLTSWLFGGGKSPQEQLRAHQRSLGRAERELDRERTK). Residues 15–97 (QEQLRAHQRS…AISLRLQTMR (83 aa)) adopt a coiled-coil conformation. The span at 26 to 38 (GRAERELDRERTK) shows a compositional bias: basic and acidic residues.

It belongs to the SNF7 family. Core component of the ESCRT-III complex (endosomal sorting required for transport complex III). ESCRT-III appears to be sequentially assembled as a flat lattice on the endosome membrane.

It localises to the cytoplasm. It is found in the endosome membrane. Its function is as follows. Required for the sorting and concentration of proteins resulting in the entry of these proteins into the invaginating vesicles of the multivesicular body (MVB). Acts a component of the ESCRT-III complex, which appears to be critical for late steps in MVB sorting, such as membrane invagination and final cargo sorting and recruitment of late-acting components of the sorting machinery. The MVB pathway requires the sequential function of ESCRT-O, -I,-II and -III complex assemblies. The polypeptide is ESCRT-III complex subunit did4 (did4) (Schizosaccharomyces pombe (strain 972 / ATCC 24843) (Fission yeast)).